A 309-amino-acid polypeptide reads, in one-letter code: Protoheme IX farnesyltransferase (309 aa).

The next 9 membrane-spanning stretches (helical) occupy residues 30–49, 53–75, 98–118, 123–143, 151–171, 178–198, 224–244, 247–267, and 285–305; these read VMSLVVFTALVGILVAPGGV, IGFTAILFIALGAGASGALNMWY, AGEALTLGLWLSAISVAMLGL, VAAGLLAFTIFFYAVVYSMWL, IVIGGAAGSFPPMIGWAAVTG, VLMFGIIFMWTPPHFWALALF, ILIYTILLVPVALGLVLTEVA, VYLITALVCNAIFLKGAYDIW, and VFKFSLLYLFLHFGALLLDAI.

This sequence belongs to the UbiA prenyltransferase family. Protoheme IX farnesyltransferase subfamily. As to quaternary structure, interacts with CtaA.

It localises to the cell inner membrane. It carries out the reaction heme b + (2E,6E)-farnesyl diphosphate + H2O = Fe(II)-heme o + diphosphate. Its pathway is porphyrin-containing compound metabolism; heme O biosynthesis; heme O from protoheme: step 1/1. In terms of biological role, converts heme B (protoheme IX) to heme O by substitution of the vinyl group on carbon 2 of heme B porphyrin ring with a hydroxyethyl farnesyl side group. The protein is Protoheme IX farnesyltransferase of Jannaschia sp. (strain CCS1).